The chain runs to 310 residues: Manganese ABC transporter substrate-binding lipoprotein PsaA (310 aa).

Residues 1–20 (MKKIASVLALFVALLFGLLA) form the signal peptide. The N-palmitoyl cysteine moiety is linked to residue cysteine 21. Cysteine 21 carries the S-diacylglycerol cysteine lipid modification. Residues histidine 68, histidine 140, glutamate 206, and aspartate 281 each contribute to the Mn(2+) site.

This sequence belongs to the bacterial solute-binding protein 9 family. Lipoprotein receptor antigen (Lrai) subfamily.

It is found in the cell membrane. Functionally, part of the ATP-binding cassette (ABC) transport system PsaABC involved in manganese import. Binds manganese with high affinity and specificity and delivers it to the membrane permease for translocation into the cytoplasm. Also acts as an adhesin which is involved on adherence to extracellular matrix. This is Manganese ABC transporter substrate-binding lipoprotein PsaA from Streptococcus pneumoniae.